A 450-amino-acid polypeptide reads, in one-letter code: Phosphoglucosamine mutase (450 aa).

Ser102 serves as the catalytic Phosphoserine intermediate. Residues Ser102, Asp243, Asp245, and Asp247 each contribute to the Mg(2+) site. Ser102 carries the post-translational modification Phosphoserine.

Belongs to the phosphohexose mutase family. Requires Mg(2+) as cofactor. Activated by phosphorylation.

The catalysed reaction is alpha-D-glucosamine 1-phosphate = D-glucosamine 6-phosphate. Its function is as follows. Catalyzes the conversion of glucosamine-6-phosphate to glucosamine-1-phosphate. In Rhizobium etli (strain CIAT 652), this protein is Phosphoglucosamine mutase.